A 94-amino-acid polypeptide reads, in one-letter code: uncharacterized protein (94 aa).

This is an uncharacterized protein from Bacillus subtilis (strain 168).